Consider the following 198-residue polypeptide: Large ribosomal subunit protein bL9 (198 aa).

This sequence belongs to the bacterial ribosomal protein bL9 family.

Functionally, binds to the 23S rRNA. In Bartonella tribocorum (strain CIP 105476 / IBS 506), this protein is Large ribosomal subunit protein bL9.